The chain runs to 327 residues: Methionyl-tRNA formyltransferase (327 aa).

121-124 serves as a coordination point for (6S)-5,6,7,8-tetrahydrofolate; it reads SLLP.

The protein belongs to the Fmt family.

The enzyme catalyses L-methionyl-tRNA(fMet) + (6R)-10-formyltetrahydrofolate = N-formyl-L-methionyl-tRNA(fMet) + (6S)-5,6,7,8-tetrahydrofolate + H(+). Functionally, attaches a formyl group to the free amino group of methionyl-tRNA(fMet). The formyl group appears to play a dual role in the initiator identity of N-formylmethionyl-tRNA by promoting its recognition by IF2 and preventing the misappropriation of this tRNA by the elongation apparatus. The polypeptide is Methionyl-tRNA formyltransferase (Burkholderia multivorans (strain ATCC 17616 / 249)).